The sequence spans 456 residues: Smoothelin-like protein 2 (456 aa).

Positions 24–88 form a coiled coil; sequence LEGAVRALHE…RQVEALGLAT (65 aa). T96 is modified (phosphothreonine). Residues S98, S126, and S131 each carry the phosphoserine modification. The segment covering 120-129 has biased composition (polar residues); that stretch reads HATFSLSGRS. 3 disordered regions span residues 120–140, 154–190, and 220–310; these read HATFSLSGRSPSVEHDEASDL, GHQLDAGPANGSSEVQTSSAQEPPRPRPVSLSLRMPH, and VGGF…GAQA. The segment covering 131 to 140 has biased composition (basic and acidic residues); the sequence is SVEHDEASDL. Residues 163–174 are compositionally biased toward polar residues; it reads NGSSEVQTSSAQ. Low complexity predominate over residues 242–251; sequence SSSFTRSLSG. A phosphoserine mark is found at S250, S252, and S265. The segment covering 268 to 279 has biased composition (pro residues); that stretch reads LVTPPQSPPSSQ. T270 carries the post-translational modification Phosphothreonine. S274 carries the phosphoserine modification. Residues 298-308 show a composition bias toward polar residues; it reads RSQTLPRTSGA. The residue at position 339 (S339) is a Phosphoserine. Positions 346–453 constitute a Calponin-homology (CH) domain; it reads SSIKQILLEW…YVQSLYNHLR (108 aa).

This sequence belongs to the smoothelin family.

The sequence is that of Smoothelin-like protein 2 (Smtnl2) from Mus musculus (Mouse).